The primary structure comprises 203 residues: MKKQLMTSCLFAAVLAAPAFAEDADVLQSRLNQVNSFHASFTQRVTGAEGGAVQEGEGELWIKRPNLFNWHMTTPDESVLVSDGKTLWFYNPFVEQAIANWLKNATGNTPFMLITRNSAADWGQYNVKQQGDSFSLVPKADNGNLKQFTINVTANGTITGFTAVEQDGQRSTYQLKSQKNGPVDDAKFHFTLPKGVTLDDQRQ.

Residues 1-21 (MKKQLMTSCLFAAVLAAPAFA) form the signal peptide.

The protein belongs to the LolA family. Monomer.

It is found in the periplasm. Its function is as follows. Participates in the translocation of lipoproteins from the inner membrane to the outer membrane. Only forms a complex with a lipoprotein if the residue after the N-terminal Cys is not an aspartate (The Asp acts as a targeting signal to indicate that the lipoprotein should stay in the inner membrane). This chain is Outer-membrane lipoprotein carrier protein, found in Sodalis glossinidius (strain morsitans).